The chain runs to 341 residues: Farnesyl pyrophosphate synthase 2 (341 aa).

K46, R49, and Q85 together coordinate isopentenyl diphosphate. Mg(2+) contacts are provided by D92 and D96. A dimethylallyl diphosphate-binding site is contributed by R101. Isopentenyl diphosphate is bound at residue R102. The dimethylallyl diphosphate site is built by K189, T190, Q228, K245, and K254.

This sequence belongs to the FPP/GGPP synthase family. The cofactor is Mg(2+). As to expression, mainly expressed in trichomes, roots and flowers, and, to a lower extent, in leaves and stems.

It localises to the cytoplasm. It is found in the nucleus. The enzyme catalyses isopentenyl diphosphate + dimethylallyl diphosphate = (2E)-geranyl diphosphate + diphosphate. It catalyses the reaction isopentenyl diphosphate + (2E)-geranyl diphosphate = (2E,6E)-farnesyl diphosphate + diphosphate. It functions in the pathway isoprenoid biosynthesis; farnesyl diphosphate biosynthesis; farnesyl diphosphate from geranyl diphosphate and isopentenyl diphosphate: step 1/1. The protein operates within sesquiterpene biosynthesis. It participates in isoprenoid biosynthesis; geranyl diphosphate biosynthesis; geranyl diphosphate from dimethylallyl diphosphate and isopentenyl diphosphate: step 1/1. Functionally, catalyzes the sequential condensation of isopentenyl pyrophosphate with the allylic pyrophosphates, dimethylallyl pyrophosphate, and then with the resultant geranylpyrophosphate to the ultimate product farnesyl pyrophosphate. The polypeptide is Farnesyl pyrophosphate synthase 2 (Cannabis sativa (Hemp)).